We begin with the raw amino-acid sequence, 145 residues long: Heat shock protein hsp-16.2 (145 aa).

One can recognise a sHSP domain in the interval 32–137 (VCRISPSESS…QGRSIPIQQA (106 aa)).

It belongs to the small heat shock protein (HSP20) family.

This Caenorhabditis elegans protein is Heat shock protein hsp-16.2.